The sequence spans 500 residues: L-2-amino-4-chloropent-4-enoate dechlorinase/desaturase (500 aa).

Lys311 bears the N6-(pyridoxal phosphate)lysine mark.

The protein belongs to the trans-sulfuration enzymes family. The cofactor is pyridoxal 5'-phosphate.

It catalyses the reaction L-2-amino-4-chloropent-4-enoate = L-propargylglycine + chloride + H(+). It functions in the pathway amino-acid metabolism. The protein operates within antibiotic biosynthesis. Functionally, involved in the biosynthesis of terminal alkyne-containing amino acids such as L-propargylglycine (Pra) and L-beta-ethynylserine, that are produced as antibiotics by S.cattleya. Catalyzes gamma-elimination of chloride from 4-chloro-allyl-L-glycine (also named L-2-amino-4-chloropent-4-enoate), followed by an isomerization, to form the terminal-alkyne product L-propargylglycine. This Streptantibioticus cattleyicolor (strain ATCC 35852 / DSM 46488 / JCM 4925 / NBRC 14057 / NRRL 8057) (Streptomyces cattleya) protein is L-2-amino-4-chloropent-4-enoate dechlorinase/desaturase.